The primary structure comprises 732 residues: 1,4-alpha-glucan branching enzyme GlgB 2 (732 aa).

Asp-413 acts as the Nucleophile in catalysis. Catalysis depends on Glu-466, which acts as the Proton donor.

Belongs to the glycosyl hydrolase 13 family. GlgB subfamily. Monomer.

It carries out the reaction Transfers a segment of a (1-&gt;4)-alpha-D-glucan chain to a primary hydroxy group in a similar glucan chain.. Its pathway is glycan biosynthesis; glycogen biosynthesis. In terms of biological role, catalyzes the formation of the alpha-1,6-glucosidic linkages in glycogen by scission of a 1,4-alpha-linked oligosaccharide from growing alpha-1,4-glucan chains and the subsequent attachment of the oligosaccharide to the alpha-1,6 position. This chain is 1,4-alpha-glucan branching enzyme GlgB 2, found in Rhizobium etli (strain ATCC 51251 / DSM 11541 / JCM 21823 / NBRC 15573 / CFN 42).